The primary structure comprises 240 residues: MLTRKQHELLLFIHERLKETGIPPSFDEMKEALDLASKSGIHRLITALEERGFIRRLPNRARALEVLRLPDSIAPGLSPQKKFAPSVIEGSLGKVASVQPVRPAPAPQNSEAPATVSVPVMGRIAAGVPISAIQNQTHMLSLPPEMIGAGEHYALEVKGDSMIDAGIFDGDTIIIKRGDTANPGEIVVALVDEEEATLKRFRREGASIALEAANPAYETRIFGPDRVHVQGKLVGLIRRY.

The segment at residues 26–46 (FDEMKEALDLASKSGIHRLIT) is a DNA-binding region (H-T-H motif). Active-site for autocatalytic cleavage activity residues include S161 and K199.

Belongs to the peptidase S24 family. Homodimer.

The enzyme catalyses Hydrolysis of Ala-|-Gly bond in repressor LexA.. Functionally, represses a number of genes involved in the response to DNA damage (SOS response), including recA and lexA. In the presence of single-stranded DNA, RecA interacts with LexA causing an autocatalytic cleavage which disrupts the DNA-binding part of LexA, leading to derepression of the SOS regulon and eventually DNA repair. The protein is LexA repressor of Brucella melitensis biotype 1 (strain ATCC 23456 / CCUG 17765 / NCTC 10094 / 16M).